Reading from the N-terminus, the 852-residue chain is Lon protease homolog 2, peroxisomal (852 aa).

Serine 2 carries the N-acetylserine modification. Positions 13 to 222 constitute a Lon N-terminal domain; it reads LPLLLTHEGV…MTIPLLVRQI (210 aa). ATP is bound at residue 375-382; that stretch reads GPPGVGKT. The Lon proteolytic domain maps to 651–837; that stretch reads LSQPGVAIGL…DEVLNAAFDG (187 aa). Residues serine 743 and lysine 786 contribute to the active site. Positions 850 to 852 match the Microbody targeting signal motif; sequence SKL.

It belongs to the peptidase S16 family. As to quaternary structure, interacts with PEX5. Interacts with TYSND1. May interact with enzymes involved in beta-oxidation of fatty acids, including ACOX1/AOX.

The protein localises to the peroxisome matrix. It carries out the reaction Hydrolysis of proteins in presence of ATP.. Functionally, ATP-dependent serine protease that mediates the selective degradation of misfolded and unassembled polypeptides in the peroxisomal matrix. Necessary for type 2 peroxisome targeting signal (PTS2)-containing protein processing and facilitates peroxisome matrix protein import. May indirectly regulate peroxisomal fatty acid beta-oxidation through degradation of the self-processed forms of TYSND1. This chain is Lon protease homolog 2, peroxisomal, found in Bos taurus (Bovine).